Consider the following 360-residue polypeptide: S-adenosylmethionine:tRNA ribosyltransferase-isomerase (360 aa).

It belongs to the QueA family. In terms of assembly, monomer.

Its subcellular location is the cytoplasm. It carries out the reaction 7-aminomethyl-7-carbaguanosine(34) in tRNA + S-adenosyl-L-methionine = epoxyqueuosine(34) in tRNA + adenine + L-methionine + 2 H(+). It participates in tRNA modification; tRNA-queuosine biosynthesis. Functionally, transfers and isomerizes the ribose moiety from AdoMet to the 7-aminomethyl group of 7-deazaguanine (preQ1-tRNA) to give epoxyqueuosine (oQ-tRNA). This is S-adenosylmethionine:tRNA ribosyltransferase-isomerase from Rhodopseudomonas palustris (strain BisB5).